Consider the following 114-residue polypeptide: MESEPLYKLKAEFFKTLAHPARIRILELLVERDRSVGELLSSDVGLESSNLSQQLGVLRRAGVVAARRDGNAMIYSIAAPDIAELLAVARKVLARVLSDRVAVLEDLRAGGSAT.

The HTH arsR-type domain maps to 2–97 (ESEPLYKLKA…VARKVLARVL (96 aa)). The H-T-H motif DNA-binding region spans 37–60 (GELLSSDVGLESSNLSQQLGVLRR).

This is an uncharacterized protein from Mycobacterium tuberculosis (strain CDC 1551 / Oshkosh).